The sequence spans 180 residues: MAAGTAAALAFLSQESRTRAGGVGGLRVPAPVTMDSFFFGCELSGHTRSFTFKVEEEDDAEHVLALTMLCLTEGAKDECNVVEVVARNHDHQEIAVPVANLKLSCQPMLSLDDFQLQPPVTFRLKSGSGPVRITGRHQIVTMSNDVSEEESEEEEEEEDSDEEEAELCPILPAKKQGGRP.

A2 carries the N-acetylalanine modification. Phosphoserine occurs at positions 13 and 16. Residue R27 is modified to Omega-N-methylarginine. The tract at residues T141–P180 is disordered. Positions V146–E166 are enriched in acidic residues. Phosphoserine is present on residues S147, S151, and S160.

This sequence belongs to the nucleoplasmin family. Interacts with NPM (via N-terminus). Forms a pentamer with NPM at a ratio 4:1 (NPM3/NPM). Two pentamers form a decamer. In terms of processing, phosphorylated.

The protein localises to the nucleus. It is found in the nucleolus. Its function is as follows. Plays a role in the regulation of diverse cellular processes such as ribosome biogenesis, chromatin remodeling or protein chaperoning. Modulates the histone chaperone function and the RNA-binding activity of nucleolar phosphoprotein B23/NPM. Efficiently mediates chromatin remodeling when included in a pentamer containing NPM3 and NPM. This Pongo abelii (Sumatran orangutan) protein is Nucleoplasmin-3 (NPM3).